The sequence spans 957 residues: Bifunctional glutamine synthetase adenylyltransferase/adenylyl-removing enzyme (957 aa).

The adenylyl removase stretch occupies residues 1 to 447 (MFSQLDFTGL…IFNQLIGEEE (447 aa)). The segment at 454–957 (VNEQLAIWQD…IWQQIFTDNE (504 aa)) is adenylyl transferase.

The protein belongs to the GlnE family. Mg(2+) is required as a cofactor.

It carries out the reaction [glutamine synthetase]-O(4)-(5'-adenylyl)-L-tyrosine + phosphate = [glutamine synthetase]-L-tyrosine + ADP. The catalysed reaction is [glutamine synthetase]-L-tyrosine + ATP = [glutamine synthetase]-O(4)-(5'-adenylyl)-L-tyrosine + diphosphate. In terms of biological role, involved in the regulation of glutamine synthetase GlnA, a key enzyme in the process to assimilate ammonia. When cellular nitrogen levels are high, the C-terminal adenylyl transferase (AT) inactivates GlnA by covalent transfer of an adenylyl group from ATP to specific tyrosine residue of GlnA, thus reducing its activity. Conversely, when nitrogen levels are low, the N-terminal adenylyl removase (AR) activates GlnA by removing the adenylyl group by phosphorolysis, increasing its activity. The regulatory region of GlnE binds the signal transduction protein PII (GlnB) which indicates the nitrogen status of the cell. The polypeptide is Bifunctional glutamine synthetase adenylyltransferase/adenylyl-removing enzyme (Haemophilus ducreyi (strain 35000HP / ATCC 700724)).